A 311-amino-acid polypeptide reads, in one-letter code: Cytochrome c biogenesis protein CcsA (311 aa).

8 helical membrane-spanning segments follow: residues 11–31 (VLLL…LAFW), 44–64 (VVQL…LWRW), 68–88 (GHFP…GCTF), 101–121 (LVPA…SFAL), 146–166 (VIMM…AVLF), 217–237 (TITV…VWAN), 251–268 (TWAL…HTRL), and 280–300 (VAVS…LLGI).

Belongs to the CcmF/CycK/Ccl1/NrfE/CcsA family. As to quaternary structure, may interact with ccs1.

Its subcellular location is the cellular thylakoid membrane. Required during biogenesis of c-type cytochromes (cytochrome c6 and cytochrome f) at the step of heme attachment. The polypeptide is Cytochrome c biogenesis protein CcsA (Synechococcus sp. (strain RCC307)).